A 616-amino-acid chain; its full sequence is Pentatricopeptide repeat-containing protein At4g15720 (616 aa).

10 PPR repeats span residues 63 to 93 (DTFT…MCEP), 94 to 128 (NVVS…RPVP), 130 to 164 (NEYT…GLRR), 165 to 199 (NIVV…GRNV), 200 to 228 (VSWT…FNAA), 235 to 269 (NQFM…GYES), 270 to 300 (NTVV…IRCH), 301 to 335 (SVIS…RINP), 336 to 371 (NYVT…GVVP), and 372 to 402 (DSRH…IEVG). Positions 409–484 (LWGALLSAGR…ERACSWIENK (76 aa)) are type E motif. The type E(+) motif stretch occupies residues 485-515 (DSVYVFHAGDLSCDESGEIERFLKDLEKRMK). Residues 522-616 (SSSMITTSSS…NGSCTCRDYW (95 aa)) are type DYW motif.

This sequence belongs to the PPR family. PCMP-H subfamily.

The sequence is that of Pentatricopeptide repeat-containing protein At4g15720 (PCMP-H1) from Arabidopsis thaliana (Mouse-ear cress).